The sequence spans 358 residues: Fructose-bisphosphate aldolase 1, cytoplasmic (358 aa).

Arg39 contacts substrate. Catalysis depends on Glu183, which acts as the Proton acceptor. Lys225 (schiff-base intermediate with dihydroxyacetone-P) is an active-site residue. Residues 266-268 and Arg298 contribute to the substrate site; that span reads SGG.

It belongs to the class I fructose-bisphosphate aldolase family. Homotetramer. Expressed in callus.

The protein localises to the cytoplasm. Its subcellular location is the cytosol. It catalyses the reaction beta-D-fructose 1,6-bisphosphate = D-glyceraldehyde 3-phosphate + dihydroxyacetone phosphate. It functions in the pathway carbohydrate degradation; glycolysis; D-glyceraldehyde 3-phosphate and glycerone phosphate from D-glucose: step 4/4. In terms of biological role, fructose-bisphosphate aldolase that plays a key role in glycolysis and gluconeogenesis. Involved in gibberellin-mediated root growth. May be regulated by CDPK13. Associates with vacuolar proton ATPase (V-ATPase) and may regulate the V-ATPase-mediated control of root cell elongation. The polypeptide is Fructose-bisphosphate aldolase 1, cytoplasmic (Oryza sativa subsp. japonica (Rice)).